A 720-amino-acid chain; its full sequence is Polyribonucleotide nucleotidyltransferase (720 aa).

The Mg(2+) site is built by D484 and D490. One can recognise a KH domain in the interval 551–610 (PRMYKINIDPSKIGSVIGSGGKTIRSIIEQTNTTVDIENDGTVVIGATDEASAKKAIKII). Residues 620–688 (GSIYTGKVTR…NQGRVNLSHR (69 aa)) enclose the S1 motif domain. The segment at 697–720 (PISRNRDSQPRRPGPFRPSDRSNS) is disordered.

It belongs to the polyribonucleotide nucleotidyltransferase family. The cofactor is Mg(2+).

The protein resides in the cytoplasm. It catalyses the reaction RNA(n+1) + phosphate = RNA(n) + a ribonucleoside 5'-diphosphate. Its function is as follows. Involved in mRNA degradation. Catalyzes the phosphorolysis of single-stranded polyribonucleotides processively in the 3'- to 5'-direction. The protein is Polyribonucleotide nucleotidyltransferase of Dehalococcoides mccartyi (strain CBDB1).